A 694-amino-acid polypeptide reads, in one-letter code: Voltage-gated chloride channel TMC4 (694 aa).

The disordered stretch occupies residues Met-1–Ser-21. Residues Met-1–Arg-150 are Extracellular-facing. Residues Phe-151–Thr-171 traverse the membrane as a helical segment. The Cytoplasmic portion of the chain corresponds to Trp-172–Asn-231. The helical transmembrane segment at Leu-232–Leu-252 threads the bilayer. The Extracellular segment spans residues Arg-253–Arg-330. The helical transmembrane segment at Ala-331–Ala-351 threads the bilayer. The Cytoplasmic portion of the chain corresponds to Thr-352 to Tyr-376. A helical membrane pass occupies residues Leu-377–Ala-397. Over Ser-398–Gln-407 the chain is Extracellular. Residues Ile-408–Val-428 form a helical membrane-spanning segment. The Cytoplasmic portion of the chain corresponds to Ser-429–Glu-465. Residues Met-466–Phe-486 form a helical membrane-spanning segment. Topologically, residues Pro-487 to Glu-513 are extracellular. Residues Val-514–Leu-534 traverse the membrane as a helical segment. Residue Pro-535 is a topological domain, cytoplasmic. The helical transmembrane segment at Leu-536–Ile-556 threads the bilayer. Residues Tyr-557–Pro-574 are Extracellular-facing. The chain crosses the membrane as a helical span at residues Leu-575–Ile-595. Residues Pro-596–Gln-635 lie on the Cytoplasmic side of the membrane. The helical transmembrane segment at Ala-636–Ala-656 threads the bilayer. Residues Asn-657–Ser-694 are Extracellular-facing. Asn-691 is a glycosylation site (N-linked (GlcNAc...) asparagine).

It belongs to the TMC family. Expressed in taste bud cells of the posterior tongue. Ubiquitously expressed.

Its subcellular location is the membrane. It carries out the reaction chloride(in) = chloride(out). Its function is as follows. Voltage-gated chloride channel involved in high-concentration salt taste sensation. Depolarization induced by high NaCl concentration may trigger the activation of TMC4-mediated chloride influx into taste bud cells, helping the return to resting potential. Also allows permeation of organic anions including gluconate, but their current amplitudes at positive potentials are less than that of chloride. Involved in pH and temperature-dependent modulation of salty taste. The polypeptide is Voltage-gated chloride channel TMC4 (Mus musculus (Mouse)).